Consider the following 298-residue polypeptide: GTP cyclohydrolase FolE2 (298 aa).

This sequence belongs to the GTP cyclohydrolase IV family.

The enzyme catalyses GTP + H2O = 7,8-dihydroneopterin 3'-triphosphate + formate + H(+). It functions in the pathway cofactor biosynthesis; 7,8-dihydroneopterin triphosphate biosynthesis; 7,8-dihydroneopterin triphosphate from GTP: step 1/1. Functionally, converts GTP to 7,8-dihydroneopterin triphosphate. This is GTP cyclohydrolase FolE2 from Xylella fastidiosa (strain M12).